Here is a 147-residue protein sequence, read N- to C-terminus: Mid1-interacting protein 1-B (147 aa).

The protein belongs to the SPOT14 family.

It is found in the nucleus. The protein resides in the cytoplasm. Its subcellular location is the cytoskeleton. Functionally, involved in stabilization of microtubules. May play a role in the regulation of lipogenesis. This chain is Mid1-interacting protein 1-B, found in Danio rerio (Zebrafish).